We begin with the raw amino-acid sequence, 347 residues long: ATPase GET3 (347 aa).

ATP is bound at residue 26 to 33; sequence KGGVGKTT. Residue aspartate 57 is part of the active site. Glutamate 241 and asparagine 268 together coordinate ATP. 2 residues coordinate Zn(2+): cysteine 279 and cysteine 282.

This sequence belongs to the arsA ATPase family. As to quaternary structure, homodimer. Component of the Golgi to ER traffic (GET) complex, which is composed of GET1, GET2 and GET3. Within the complex, GET1 and GET2 form a heterotetramer which is stabilized by phosphatidylinositol binding and which binds to the GET3 homodimer. Interacts with the chloride channel protein GEF1.

It localises to the cytoplasm. Its subcellular location is the endoplasmic reticulum. It is found in the golgi apparatus. Its function is as follows. ATPase required for the post-translational delivery of tail-anchored (TA) proteins to the endoplasmic reticulum. Recognizes and selectively binds the transmembrane domain of TA proteins in the cytosol. This complex then targets to the endoplasmic reticulum by membrane-bound receptors GET1 and GET2, where the tail-anchored protein is released for insertion. This process is regulated by ATP binding and hydrolysis. ATP binding drives the homodimer towards the closed dimer state, facilitating recognition of newly synthesized TA membrane proteins. ATP hydrolysis is required for insertion. Subsequently, the homodimer reverts towards the open dimer state, lowering its affinity for the GET1-GET2 receptor, and returning it to the cytosol to initiate a new round of targeting. Cooperates with the HDEL receptor ERD2 to mediate the ATP-dependent retrieval of resident ER proteins that contain a C-terminal H-D-E-L retention signal from the Golgi to the ER. Involved in low-level resistance to the oxyanions arsenite and arsenate, and in heat tolerance. The sequence is that of ATPase GET3 from Meyerozyma guilliermondii (strain ATCC 6260 / CBS 566 / DSM 6381 / JCM 1539 / NBRC 10279 / NRRL Y-324) (Yeast).